The chain runs to 145 residues: Sec-independent protein translocase protein TatB (145 aa).

Residues 1 to 21 (MLDVGMTELLCFAIIAILVLG) traverse the membrane as a helical segment.

It belongs to the TatB family. In terms of assembly, the Tat system comprises two distinct complexes: a TatABC complex, containing multiple copies of TatA, TatB and TatC subunits, and a separate TatA complex, containing only TatA subunits. Substrates initially bind to the TatABC complex, which probably triggers association of the separate TatA complex to form the active translocon.

It localises to the cell inner membrane. Its function is as follows. Part of the twin-arginine translocation (Tat) system that transports large folded proteins containing a characteristic twin-arginine motif in their signal peptide across membranes. Together with TatC, TatB is part of a receptor directly interacting with Tat signal peptides. TatB may form an oligomeric binding site that transiently accommodates folded Tat precursor proteins before their translocation. The chain is Sec-independent protein translocase protein TatB from Acinetobacter baumannii (strain ATCC 17978 / DSM 105126 / CIP 53.77 / LMG 1025 / NCDC KC755 / 5377).